The following is a 79-amino-acid chain: Small ribosomal subunit protein uS17 (79 aa).

The protein belongs to the universal ribosomal protein uS17 family. In terms of assembly, part of the 30S ribosomal subunit.

In terms of biological role, one of the primary rRNA binding proteins, it binds specifically to the 5'-end of 16S ribosomal RNA. The protein is Small ribosomal subunit protein uS17 of Bartonella quintana (strain Toulouse) (Rochalimaea quintana).